Here is a 254-residue protein sequence, read N- to C-terminus: Hemin import ATP-binding protein HmuV (254 aa).

The ABC transporter domain maps to 2 to 239 (LNINQVNINL…DTLSQVWHYD (238 aa)). 34–41 (GPNGAGKS) contacts ATP.

The protein belongs to the ABC transporter superfamily. Heme (hemin) importer (TC 3.A.1.14.5) family. As to quaternary structure, the complex is composed of two ATP-binding proteins (HmuV), two transmembrane proteins (HmuU) and a solute-binding protein (HmuT).

It is found in the cell inner membrane. Functionally, part of the ABC transporter complex HmuTUV involved in hemin import. Responsible for energy coupling to the transport system. This Shewanella denitrificans (strain OS217 / ATCC BAA-1090 / DSM 15013) protein is Hemin import ATP-binding protein HmuV.